We begin with the raw amino-acid sequence, 322 residues long: UV DNA damage endonuclease (322 aa).

The protein belongs to the uve1/UvsE family.

Component in a DNA repair pathway. Removal of UV LIGHT damaged nucleotides. Recognizes pyrimidine dimers and cleave a phosphodiester bond immediately 5' to the lesion. In Nostoc sp. (strain PCC 7120 / SAG 25.82 / UTEX 2576), this protein is UV DNA damage endonuclease.